Reading from the N-terminus, the 229-residue chain is Large ribosomal subunit protein uL1 (229 aa).

This sequence belongs to the universal ribosomal protein uL1 family. Part of the 50S ribosomal subunit.

In terms of biological role, binds directly to 23S rRNA. The L1 stalk is quite mobile in the ribosome, and is involved in E site tRNA release. Protein L1 is also a translational repressor protein, it controls the translation of the L11 operon by binding to its mRNA. This chain is Large ribosomal subunit protein uL1, found in Bifidobacterium animalis subsp. lactis (strain AD011).